Here is a 312-residue protein sequence, read N- to C-terminus: Apolipoprotein E (312 aa).

The N-terminal stretch at 1 to 18 (MKALWALLLVPLLTGCLA) is a signal peptide. A run of 8 repeats spans residues 72 to 93 (VLMEDTMTEVKAYKKELEEQLG), 94 to 115 (PVAEETRARLAKEVQAAQARLG), 116 to 137 (ADMEDLRNRLGQYRNEVNTMLG), 138 to 159 (QSTEELRSRLSTHLRKMRKRLM), 160 to 181 (RDADDLQKRLAVYKAGAQEGAE), 182 to 203 (RGVSAIRERLGPLVEQGRQRTA), 204 to 225 (NLGAGAAQPLRDRAQALSDRIR), and 226 to 247 (GRLEEVGNQARDRLEEVREQME). The segment at 72 to 247 (VLMEDTMTEV…RLEEVREQME (176 aa)) is 8 X 22 AA approximate tandem repeats. Met135 bears the Methionine sulfoxide mark. Ser139 carries the post-translational modification Phosphoserine. Residues 150–160 (HLRKMRKRLMR) form an LDL and other lipoprotein receptors binding region. Residues 150–160 (HLRKMRKRLMR) are LDL receptor binding. 154-157 (MRKR) lines the heparin pocket. The lipid-binding and lipoprotein association stretch occupies residues 202–282 (TANLGAGAAQ…GWFEPLVEDM (81 aa)). 221-228 (SDRIRGRL) contributes to the heparin binding site. Positions 258 to 312 (QQIRLQAEIFQARIKGWFEPLVEDMQRQWANLMEKIQASVATNSIASTTVPLENQ) are homooligomerization. The interval 270–282 (RIKGWFEPLVEDM) is specificity for association with VLDL.

The protein belongs to the apolipoprotein A1/A4/E family. Homotetramer. May interact with ABCA1; functionally associated with ABCA1 in the biogenesis of HDLs. May interact with APP/A4 amyloid-beta peptide; the interaction is extremely stable in vitro but its physiological significance is unclear. May interact with MAPT. May interact with MAP2. In the cerebrospinal fluid, interacts with secreted SORL1. Interacts with PMEL; this allows the loading of PMEL luminal fragment on ILVs to induce fibril nucleation. In terms of processing, APOE exists as multiple glycosylated and sialylated glycoforms within cells and in plasma. The extent of glycosylation and sialylation are tissue and context specific. Glycated in plasma VLDL. Post-translationally, phosphorylated by FAM20C in the extracellular medium.

Its subcellular location is the secreted. The protein localises to the extracellular space. It localises to the extracellular matrix. It is found in the extracellular vesicle. The protein resides in the endosome. Its subcellular location is the multivesicular body. APOE is an apolipoprotein, a protein associating with lipid particles, that mainly functions in lipoprotein-mediated lipid transport between organs via the plasma and interstitial fluids. APOE is a core component of plasma lipoproteins and is involved in their production, conversion and clearance. Apolipoproteins are amphipathic molecules that interact both with lipids of the lipoprotein particle core and the aqueous environment of the plasma. As such, APOE associates with chylomicrons, chylomicron remnants, very low density lipoproteins (VLDL) and intermediate density lipoproteins (IDL) but shows a preferential binding to high-density lipoproteins (HDL). It also binds a wide range of cellular receptors including the LDL receptor/LDLR and the very low-density lipoprotein receptor/VLDLR that mediate the cellular uptake of the APOE-containing lipoprotein particles. Finally, APOE also has a heparin-binding activity and binds heparan-sulfate proteoglycans on the surface of cells, a property that supports the capture and the receptor-mediated uptake of APOE-containing lipoproteins by cells. The protein is Apolipoprotein E (Apoe) of Rattus norvegicus (Rat).